Consider the following 160-residue polypeptide: Dihydrofolate reductase (160 aa).

The DHFR domain maps to 2–159 (TFSLIVATTL…YDCRFLILTR (158 aa)). Residue I6 coordinates substrate. Residues A8 and 14–20 (VIGKDNQ) contribute to the NADP(+) site. Residue D28 coordinates substrate. 46 to 47 (KT) is an NADP(+) binding site. Residues R53 and R58 each contribute to the substrate site. NADP(+) is bound by residues 64–65 (SR) and 96–103 (GGGELFKQ). T114 contacts substrate.

The protein belongs to the dihydrofolate reductase family.

The catalysed reaction is (6S)-5,6,7,8-tetrahydrofolate + NADP(+) = 7,8-dihydrofolate + NADPH + H(+). It participates in cofactor biosynthesis; tetrahydrofolate biosynthesis; 5,6,7,8-tetrahydrofolate from 7,8-dihydrofolate: step 1/1. Its function is as follows. Key enzyme in folate metabolism. Catalyzes an essential reaction for de novo glycine and purine synthesis, and for DNA precursor synthesis. This chain is Dihydrofolate reductase (folA), found in Haemophilus influenzae (strain ATCC 51907 / DSM 11121 / KW20 / Rd).